The following is a 386-amino-acid chain: Erythronate-4-phosphate dehydrogenase (386 aa).

Substrate is bound by residues Ser59 and Thr81. Asp162 lines the NAD(+) pocket. Arg239 is a catalytic residue. Asp262 is an NAD(+) binding site. Glu267 is an active-site residue. The active-site Proton donor is the His284. Gly287 provides a ligand contact to NAD(+). Tyr288 is a substrate binding site.

It belongs to the D-isomer specific 2-hydroxyacid dehydrogenase family. PdxB subfamily. In terms of assembly, homodimer.

It is found in the cytoplasm. The enzyme catalyses 4-phospho-D-erythronate + NAD(+) = (R)-3-hydroxy-2-oxo-4-phosphooxybutanoate + NADH + H(+). Its pathway is cofactor biosynthesis; pyridoxine 5'-phosphate biosynthesis; pyridoxine 5'-phosphate from D-erythrose 4-phosphate: step 2/5. Functionally, catalyzes the oxidation of erythronate-4-phosphate to 3-hydroxy-2-oxo-4-phosphonooxybutanoate. This Psychrobacter cryohalolentis (strain ATCC BAA-1226 / DSM 17306 / VKM B-2378 / K5) protein is Erythronate-4-phosphate dehydrogenase.